Reading from the N-terminus, the 208-residue chain is Urease accessory protein UreG 2 (208 aa).

A GTP-binding site is contributed by 16–23; sequence GPVGSGKT.

The protein belongs to the SIMIBI class G3E GTPase family. UreG subfamily. Homodimer. UreD, UreF and UreG form a complex that acts as a GTP-hydrolysis-dependent molecular chaperone, activating the urease apoprotein by helping to assemble the nickel containing metallocenter of UreC. The UreE protein probably delivers the nickel.

Its subcellular location is the cytoplasm. In terms of biological role, facilitates the functional incorporation of the urease nickel metallocenter. This process requires GTP hydrolysis, probably effectuated by UreG. In Methylobacterium radiotolerans (strain ATCC 27329 / DSM 1819 / JCM 2831 / NBRC 15690 / NCIMB 10815 / 0-1), this protein is Urease accessory protein UreG 2.